The following is a 129-amino-acid chain: Azurin-2 (129 aa).

A Plastocyanin-like domain is found at 1-129; it reads AQCEATVESN…MMKGTLKLGS (129 aa). A disulfide bond links cysteine 3 and cysteine 26. Residues histidine 46, cysteine 112, histidine 117, and methionine 121 each contribute to the Cu cation site.

It localises to the periplasm. Transfers electrons from cytochrome c551 to cytochrome oxidase. This is Azurin-2 from Alcaligenes xylosoxydans xylosoxydans (Achromobacter xylosoxidans).